The sequence spans 581 residues: Aspartate--tRNA ligase (581 aa).

Glu-170 is a binding site for L-aspartate. Positions 194 to 197 (QLFK) are aspartate. Arg-216 is a binding site for L-aspartate. Residues 216–218 (RDE) and Gln-225 each bind ATP. Residue His-440 participates in L-aspartate binding. Glu-469 is a binding site for ATP. Arg-476 contacts L-aspartate. 521–524 (GFDR) lines the ATP pocket.

This sequence belongs to the class-II aminoacyl-tRNA synthetase family. Type 1 subfamily. As to quaternary structure, homodimer.

The protein resides in the cytoplasm. It carries out the reaction tRNA(Asp) + L-aspartate + ATP = L-aspartyl-tRNA(Asp) + AMP + diphosphate. Functionally, catalyzes the attachment of L-aspartate to tRNA(Asp) in a two-step reaction: L-aspartate is first activated by ATP to form Asp-AMP and then transferred to the acceptor end of tRNA(Asp). This is Aspartate--tRNA ligase from Thermosipho africanus (strain TCF52B).